The primary structure comprises 473 residues: MTRGRVIQVMGPVVDVKFETGHLPAIYNALKIQHQARNENEVDIDLTLEVALHLGDDTVRTIAMASTDGLIRGMEVIDTGAPISRPVGEVTLGRVFNVLGEPIDLEGDIPADARRDPIHRPAPKFEELATEVEILETGIKVIDLLAPYIKGGKIGLFGGAGVGKTVLIQELIHNIAQEHGGISVFAGFGERTREGNDLYHEMKDSGVISKTGMVFGQMNEPPGPRMRVALTGLTMAEYFRDEQGQDVLLFIDNNFRFTQAGSEVSALLGRMPSAVGYQPTLATEMGQLQERITSTAKGSITSIQAIYVPADDYTDPAPATTFSHLDATTNLERKLAEMGIYPAVDPLASTSRALAPEIVGEEHYQVARKVQQTLQRYKELQDIIAILGMDELSDEDKLVVHRARRIQFFLSQNFHVAEQFTGQPGSYVPVKETVRGFKEILEGKYDHLPEDRFRLVGRIEEVVEKAKAMGVEV.

Position 158–165 (158–165) interacts with ATP; that stretch reads GGAGVGKT.

Belongs to the ATPase alpha/beta chains family. In terms of assembly, F-type ATPases have 2 components, CF(1) - the catalytic core - and CF(0) - the membrane proton channel. CF(1) has five subunits: alpha(3), beta(3), gamma(1), delta(1), epsilon(1). CF(0) has three main subunits: a(1), b(2) and c(9-12). The alpha and beta chains form an alternating ring which encloses part of the gamma chain. CF(1) is attached to CF(0) by a central stalk formed by the gamma and epsilon chains, while a peripheral stalk is formed by the delta and b chains.

The protein localises to the cell membrane. The enzyme catalyses ATP + H2O + 4 H(+)(in) = ADP + phosphate + 5 H(+)(out). Produces ATP from ADP in the presence of a proton gradient across the membrane. The catalytic sites are hosted primarily by the beta subunits. The polypeptide is ATP synthase subunit beta (Geobacillus stearothermophilus (Bacillus stearothermophilus)).